The following is a 180-amino-acid chain: Adenine phosphoribosyltransferase (180 aa).

The protein belongs to the purine/pyrimidine phosphoribosyltransferase family. As to quaternary structure, homodimer.

It localises to the cytoplasm. It carries out the reaction AMP + diphosphate = 5-phospho-alpha-D-ribose 1-diphosphate + adenine. It functions in the pathway purine metabolism; AMP biosynthesis via salvage pathway; AMP from adenine: step 1/1. In terms of biological role, catalyzes a salvage reaction resulting in the formation of AMP, that is energically less costly than de novo synthesis. This chain is Adenine phosphoribosyltransferase, found in Marinobacter nauticus (strain ATCC 700491 / DSM 11845 / VT8) (Marinobacter aquaeolei).